We begin with the raw amino-acid sequence, 72 residues long: Translation initiation factor IF-1 (72 aa).

The 72-residue stretch at 1–72 (MTKEEVLEFP…TKGRITYRFK (72 aa)) folds into the S1-like domain.

This sequence belongs to the IF-1 family. In terms of assembly, component of the 30S ribosomal translation pre-initiation complex which assembles on the 30S ribosome in the order IF-2 and IF-3, IF-1 and N-formylmethionyl-tRNA(fMet); mRNA recruitment can occur at any time during PIC assembly.

Its subcellular location is the cytoplasm. Its function is as follows. One of the essential components for the initiation of protein synthesis. Stabilizes the binding of IF-2 and IF-3 on the 30S subunit to which N-formylmethionyl-tRNA(fMet) subsequently binds. Helps modulate mRNA selection, yielding the 30S pre-initiation complex (PIC). Upon addition of the 50S ribosomal subunit IF-1, IF-2 and IF-3 are released leaving the mature 70S translation initiation complex. The protein is Translation initiation factor IF-1 of Agrobacterium fabrum (strain C58 / ATCC 33970) (Agrobacterium tumefaciens (strain C58)).